The following is a 407-amino-acid chain: Putative mannan endo-1,4-beta-mannosidase 9 (407 aa).

The N-terminal stretch at 1–31 (MGSKRRVILLPTLGVVVLAIAAAVLLHAGEA) is a signal peptide. Residues tryptophan 95 and asparagine 208 each coordinate substrate. The Proton donor role is filled by glutamate 209. Residue tyrosine 284 participates in substrate binding. Glutamate 324 acts as the Nucleophile in catalysis. Tryptophan 366 serves as a coordination point for substrate.

The protein belongs to the glycosyl hydrolase 5 (cellulase A) family. Expression not detected.

Its subcellular location is the secreted. The catalysed reaction is Random hydrolysis of (1-&gt;4)-beta-D-mannosidic linkages in mannans, galactomannans and glucomannans.. This is Putative mannan endo-1,4-beta-mannosidase 9 (MAN9) from Oryza sativa subsp. japonica (Rice).